A 555-amino-acid polypeptide reads, in one-letter code: Energy-dependent translational throttle protein EttA (555 aa).

2 ABC transporter domains span residues 6–259 (YTMH…AQEA) and 324–550 (LEVS…RIKY). Residue 39 to 46 (GLNGAGKS) coordinates ATP. The arm stretch occupies residues 95 to 139 (SEVVNALKRLDEVYALYADPDADFDKLAAEQGRLEEIIQAHDGHN). The tract at residues 242–322 (GNYSSWLEQK…IPPGPRLGDK (81 aa)) is ptIM. ATP is bound at residue 356 to 363 (GPNGAGKS).

It belongs to the ABC transporter superfamily. ABCF family. Translational throttle EttA subfamily. In terms of assembly, monomer. Probably contacts ribosomal proteins L1, L5, L33 and S7, the 16S and 23S rRNA and the P-site containing tRNA(fMet).

The protein resides in the cytoplasm. It catalyses the reaction ATP + H2O = ADP + phosphate + H(+). A translation factor that gates the progression of the 70S ribosomal initiation complex (IC, containing tRNA(fMet) in the P-site) into the translation elongation cycle by using a mechanism sensitive to the ATP/ADP ratio. Binds to the 70S ribosome E-site where it modulates the state of the translating ribosome during subunit translocation. ATP hydrolysis probably frees it from the ribosome, which can enter the elongation phase. The protein is Energy-dependent translational throttle protein EttA of Escherichia coli O157:H7.